A 310-amino-acid chain; its full sequence is Olfactory receptor 8B8 (310 aa).

Topologically, residues 1 to 27 (MATENASVPEFILAGLTDQPGLRMPLF) are extracellular. A glycan (N-linked (GlcNAc...) asparagine) is linked at asparagine 5. A helical transmembrane segment spans residues 28–48 (FLFLGFYMVTMVGNLGLITLI). The Cytoplasmic segment spans residues 49-55 (GLNSHLH). A helical transmembrane segment spans residues 56–76 (TPMYFFLFNLSLIDFCYSTVI). Topologically, residues 77 to 98 (TPKMLVSFVSKKNIISYSGCMT) are extracellular. The cysteines at positions 96 and 188 are disulfide-linked. A helical transmembrane segment spans residues 99–119 (QLFFFLFFVVSESFILSAMAY). The Cytoplasmic segment spans residues 120–140 (DRYVAICNPLMYTVTMSPQVC). The chain crosses the membrane as a helical span at residues 141-161 (LLLLLGVYVMGFAGAMAHTAF). Over 162 to 195 (MVKLTFCADKLVNHYMCDILPLLERSCTSTYVNE) the chain is Extracellular. Residues 196 to 216 (LVVFIVVGIDIGVPTVTIFIS) form a helical membrane-spanning segment. Over 217–238 (YALILSSILRISSTEGRSKAFS) the chain is Cytoplasmic. A helical transmembrane segment spans residues 239–259 (TCSSHIIAVSLFFGSGAFMYL). At 260-270 (KPSSLLPMNQG) the chain is on the extracellular side. Residues 271–291 (KVSSLFYTIVVPMLNPLIYSL) form a helical membrane-spanning segment. Residues 292–310 (RNKDVKVALRKTLSRSSFS) are Cytoplasmic-facing.

It belongs to the G-protein coupled receptor 1 family.

The protein localises to the cell membrane. Odorant receptor. The protein is Olfactory receptor 8B8 of Mus musculus (Mouse).